Reading from the N-terminus, the 405-residue chain is Exodeoxyribonuclease 7 large subunit (405 aa).

It belongs to the XseA family. As to quaternary structure, heterooligomer composed of large and small subunits.

The protein resides in the cytoplasm. It carries out the reaction Exonucleolytic cleavage in either 5'- to 3'- or 3'- to 5'-direction to yield nucleoside 5'-phosphates.. Functionally, bidirectionally degrades single-stranded DNA into large acid-insoluble oligonucleotides, which are then degraded further into small acid-soluble oligonucleotides. The sequence is that of Exodeoxyribonuclease 7 large subunit from Syntrophomonas wolfei subsp. wolfei (strain DSM 2245B / Goettingen).